Reading from the N-terminus, the 234-residue chain is Zinc finger FYVE domain-containing protein 21 (234 aa).

An FYVE-type zinc finger spans residues 44 to 104 (DKECPRCMQC…QCADCALVSH (61 aa)). Zn(2+)-binding residues include Cys50, Cys53, Cys66, Cys69, Cys74, Cys77, Cys96, and Cys99. The tract at residues 107–234 (AEFYDKQLKV…TKLLYESRDQ (128 aa)) is PH-like.

Interacts with PTK2/FAK1. Widely expressed.

Its subcellular location is the cell junction. It is found in the focal adhesion. It localises to the cytoplasmic vesicle. The protein resides in the endosome. Plays a role in cell adhesion, and thereby in cell motility which requires repeated formation and disassembly of focal adhesions. Regulates microtubule-induced PTK2/FAK1 dephosphorylation, an event important for focal adhesion disassembly, as well as integrin beta-1/ITGB1 cell surface expression. This Mus musculus (Mouse) protein is Zinc finger FYVE domain-containing protein 21 (Zfyve21).